The primary structure comprises 708 residues: FACT complex subunit SSRP1 (708 aa).

The residue at position 2 (Ala-2) is an N-acetylalanine. Lys-90 is covalently cross-linked (Glycyl lysine isopeptide (Lys-Gly) (interchain with G-Cter in SUMO2)). At Thr-170 the chain carries Phosphothreonine. An N6-acetyllysine modification is found at Lys-233. Residues Lys-296 and Lys-364 each participate in a glycyl lysine isopeptide (Lys-Gly) (interchain with G-Cter in SUMO2) cross-link. Lys-413 is subject to N6-acetyllysine. At Tyr-441 the chain carries Phosphotyrosine. A Phosphoserine modification is found at Ser-444. A Phosphotyrosine modification is found at Tyr-452. Residues 458–708 (EEGKIREENA…SEDSASGSDE (251 aa)) are disordered. A compositionally biased stretch (acidic residues) spans 470–496 (SSDDSGEETDESFNPGEEEEDVAEEFD). Ser-471 is subject to Phosphoserine. Low complexity predominate over residues 497 to 507 (SNASASSSSNE). Ser-510 is modified (phosphoserine; by CK2). Composition is skewed to basic and acidic residues over residues 512-546 (REEKKREQLKRAKMAKDRKSRRKSSEAKKGKDPNA) and 577-624 (LSKK…SSKR). N6-acetyllysine is present on Lys-542. A DNA-binding region (HMG box) is located at residues 547–615 (PKRPMSAYML…EYEKAMKEYE (69 aa)). Residues 625–634 (DKSKKKKKVK) show a composition bias toward basic residues. Residues 643-659 (PSRGSSSKSSSRQLSDS) show a composition bias toward low complexity. A Phosphoserine; by CK2 modification is found at Ser-657. Residues Ser-659, Ser-667, Ser-668, Ser-671, Ser-672, and Ser-673 each carry the phosphoserine modification. At Ser-688 the chain carries Phosphoserine; by CK2. Residues 695–708 (TPPSSEDSASGSDE) are compositionally biased toward polar residues.

This sequence belongs to the SSRP1 family. In terms of assembly, interacts with MYOG (via C-terminal region). Component of the FACT complex, a stable heterodimer of SSRP1 and SUPT16H. Also a component of a CK2-SPT16-SSRP1 complex which forms following UV irradiation, composed of SSRP1, SUPT16H, CSNK2A1, CSNK2A2 and CSNK2B. Binds to histone H3-H4 tetramers, but not to intact nucleosomes. Identified in a centromere complex containing histones H2A, H2B and H4, and at least CENPA, CENPB, CENPC, CENPT, CENPN, HJURP, SUPT16H, SSRP1 and RSF1. Interacts with isoform gamma of TP63. Interacts with FYTTD1/UIF. Interacts with SRF. Interacts with NEK9. Phosphorylated by CK2 following UV but not gamma irradiation. Phosphorylation inhibits its DNA-binding activity. Post-translationally, ubiquitinated. Polyubiquitinated following caspase cleavage resulting in degradation of the N-terminal ubiquitinated part of the cleaved protein. In terms of processing, sumoylated.

The protein localises to the nucleus. The protein resides in the chromosome. It is found in the nucleolus. In terms of biological role, component of the FACT complex, a general chromatin factor that acts to reorganize nucleosomes. The FACT complex is involved in multiple processes that require DNA as a template such as mRNA elongation, DNA replication and DNA repair. During transcription elongation the FACT complex acts as a histone chaperone that both destabilizes and restores nucleosomal structure. It facilitates the passage of RNA polymerase II and transcription by promoting the dissociation of one histone H2A-H2B dimer from the nucleosome, then subsequently promotes the reestablishment of the nucleosome following the passage of RNA polymerase II. The FACT complex is probably also involved in phosphorylation of 'Ser-392' of p53/TP53 via its association with CK2 (casein kinase II). Binds specifically to double-stranded DNA. Also acts as a transcriptional coactivator for p63/TP63. The protein is FACT complex subunit SSRP1 (Ssrp1) of Mus musculus (Mouse).